We begin with the raw amino-acid sequence, 210 residues long: Dynein regulatory complex protein 12 (210 aa).

The segment at 1–23 (MPPKNKEKGKKSGAQKKKKNWGA) is disordered. Positions 7–20 (EKGKKSGAQKKKKN) are enriched in basic residues. Residues 49 to 161 (RDEARRAKAS…EAKYEEILHD (113 aa)) adopt a coiled-coil conformation. The segment at 188–210 (HKEQQRQFGLTPPGSLRPPAPSL) is disordered.

This sequence belongs to the DRC12 family. As to quaternary structure, component of the nexin-dynein regulatory complex (N-DRC).

It is found in the cytoplasm. It localises to the cytoskeleton. The protein resides in the flagellum axoneme. Its function is as follows. Component of the nexin-dynein regulatory complex (N-DRC), a key regulator of ciliary/flagellar motility which maintains the alignment and integrity of the distal axoneme and regulates microtubule sliding in motile axonemes. This Homo sapiens (Human) protein is Dynein regulatory complex protein 12.